The chain runs to 215 residues: Adenylate kinase (215 aa).

10-15 is an ATP binding site; sequence GCGKGT. An NMP region spans residues 30–59; the sequence is STGDIFRQTIDQKGPYWEELKSYISKGLLV. AMP contacts are provided by residues Thr31, Arg36, 57–59, and Gln91; that span reads LLV. The tract at residues 120-157 is LID; sequence GRRICSKCKRIYNIHYSAPKKEDICDDDGEFLIQRKDD. Arg121 lines the ATP pocket. Cys124 and Cys127 together coordinate Zn(2+). 130–131 is a binding site for ATP; the sequence is IY. Zn(2+) contacts are provided by Cys144 and Asp147. Arg154 and Arg165 together coordinate AMP.

Belongs to the adenylate kinase family. Monomer.

The protein resides in the cytoplasm. The catalysed reaction is AMP + ATP = 2 ADP. The protein operates within purine metabolism; AMP biosynthesis via salvage pathway; AMP from ADP: step 1/1. In terms of biological role, catalyzes the reversible transfer of the terminal phosphate group between ATP and AMP. Plays an important role in cellular energy homeostasis and in adenine nucleotide metabolism. In Malacoplasma penetrans (strain HF-2) (Mycoplasma penetrans), this protein is Adenylate kinase.